Reading from the N-terminus, the 185-residue chain is Threonylcarbamoyl-AMP synthase (185 aa).

The YrdC-like domain occupies 5-185 (ADRIADAVAA…DLQSGETLRR (181 aa)).

The protein belongs to the SUA5 family. TsaC subfamily.

It is found in the cytoplasm. The catalysed reaction is L-threonine + hydrogencarbonate + ATP = L-threonylcarbamoyladenylate + diphosphate + H2O. In terms of biological role, required for the formation of a threonylcarbamoyl group on adenosine at position 37 (t(6)A37) in tRNAs that read codons beginning with adenine. Catalyzes the conversion of L-threonine, HCO(3)(-)/CO(2) and ATP to give threonylcarbamoyl-AMP (TC-AMP) as the acyladenylate intermediate, with the release of diphosphate. This is Threonylcarbamoyl-AMP synthase from Chromohalobacter salexigens (strain ATCC BAA-138 / DSM 3043 / CIP 106854 / NCIMB 13768 / 1H11).